The following is a 153-amino-acid chain: Large ribosomal subunit protein uL13 (153 aa).

Residues 134-153 form a disordered region; sequence EAQQPQALDVGSLNRKNVSA.

This sequence belongs to the universal ribosomal protein uL13 family. As to quaternary structure, part of the 50S ribosomal subunit.

In terms of biological role, this protein is one of the early assembly proteins of the 50S ribosomal subunit, although it is not seen to bind rRNA by itself. It is important during the early stages of 50S assembly. In Methylorubrum extorquens (strain CM4 / NCIMB 13688) (Methylobacterium extorquens), this protein is Large ribosomal subunit protein uL13.